Consider the following 528-residue polypeptide: Capsule biosynthesis protein CapD proenzyme (528 aa).

Residues 1–26 (MNSFKWGKKIILFCLIVSLMGGIGVS) form the signal peptide. The active-site Nucleophile is T352. Poly-gamma-D-glutamate contacts are provided by residues T352, 429 to 432 (GGNR), and R520.

Belongs to the gamma-glutamyltransferase family. As to quaternary structure, this enzyme consists of two polypeptide chains, which are synthesized in precursor form from a single polypeptide. In terms of processing, cleaved by autocatalysis into a large and a small subunit.

It functions in the pathway capsule biogenesis; capsule polysaccharide biosynthesis. Transpeptidase that cleaves the poly-gamma-D-glutamate capsule and catalyzes the formation of an amide bond with the side-chain amino group of meso-diaminopimelic acid (m-DAP) in the peptidoglycan scaffold. Degradation of the high-molecular weight capsule (H-capsule) to the lower-molecular weight capsule (L-capsule), which is released from the bacterial cell surface. The production of L-capsule is essential to mediate escape from host defenses. The polypeptide is Capsule biosynthesis protein CapD proenzyme (capD) (Bacillus anthracis).